A 194-amino-acid polypeptide reads, in one-letter code: ATP-dependent Clp protease proteolytic subunit (194 aa).

The active-site Nucleophile is S98. The active site involves H123.

It belongs to the peptidase S14 family. Fourteen ClpP subunits assemble into 2 heptameric rings which stack back to back to give a disk-like structure with a central cavity, resembling the structure of eukaryotic proteasomes.

It localises to the cytoplasm. It catalyses the reaction Hydrolysis of proteins to small peptides in the presence of ATP and magnesium. alpha-casein is the usual test substrate. In the absence of ATP, only oligopeptides shorter than five residues are hydrolyzed (such as succinyl-Leu-Tyr-|-NHMec, and Leu-Tyr-Leu-|-Tyr-Trp, in which cleavage of the -Tyr-|-Leu- and -Tyr-|-Trp bonds also occurs).. Functionally, cleaves peptides in various proteins in a process that requires ATP hydrolysis. Has a chymotrypsin-like activity. Plays a major role in the degradation of misfolded proteins. The sequence is that of ATP-dependent Clp protease proteolytic subunit from Ruminiclostridium cellulolyticum (strain ATCC 35319 / DSM 5812 / JCM 6584 / H10) (Clostridium cellulolyticum).